The primary structure comprises 460 residues: Cyclic 2,3-diphosphoglycerate synthetase (460 aa).

As to quaternary structure, homodimer.

The protein localises to the cytoplasm. It carries out the reaction (2R)-2,3-bisphosphoglycerate + ATP + H(+) = cyclic (2R)-2,3-bisphosphoglycerate + ADP + phosphate. Its function is as follows. Catalyzes the formation of cyclic 2,3-diphosphoglycerate (cDPG) by formation of an intramolecular phosphoanhydride bond at the expense of ATP. It is also able to catalyze the hydrolysis of cDPG but with significant slower rates (8-10 times). May be involved in thermoadaptation. The sequence is that of Cyclic 2,3-diphosphoglycerate synthetase (cpgS) from Methanothermus fervidus (strain ATCC 43054 / DSM 2088 / JCM 10308 / V24 S).